Consider the following 374-residue polypeptide: Chaperone protein DnaJ (374 aa).

Residues 5 to 70 (CYYEILNVSK…SKRSRYDQFG (66 aa)) enclose the J domain. The CR-type zinc-finger motif lies at 130-207 (GVEKEITIPR…CYGNGKVKKQ (78 aa)). Residues Cys143, Cys146, Cys159, Cys162, Cys181, Cys184, Cys195, and Cys198 each coordinate Zn(2+). CXXCXGXG motif repeat units lie at residues 143–150 (CDSCDGTG), 159–166 (CHACHGQG), 181–188 (CPVCNGTG), and 195–202 (CDACYGNG).

This sequence belongs to the DnaJ family. As to quaternary structure, homodimer. It depends on Zn(2+) as a cofactor.

It is found in the cytoplasm. Its function is as follows. Participates actively in the response to hyperosmotic and heat shock by preventing the aggregation of stress-denatured proteins and by disaggregating proteins, also in an autonomous, DnaK-independent fashion. Unfolded proteins bind initially to DnaJ; upon interaction with the DnaJ-bound protein, DnaK hydrolyzes its bound ATP, resulting in the formation of a stable complex. GrpE releases ADP from DnaK; ATP binding to DnaK triggers the release of the substrate protein, thus completing the reaction cycle. Several rounds of ATP-dependent interactions between DnaJ, DnaK and GrpE are required for fully efficient folding. Also involved, together with DnaK and GrpE, in the DNA replication of plasmids through activation of initiation proteins. In Francisella tularensis subsp. tularensis (strain FSC 198), this protein is Chaperone protein DnaJ.